The sequence spans 431 residues: Methionine aminopeptidase 2-2 (431 aa).

A disordered region spans residues 1–76 (MAAQASEKLQ…PPRVPLSTLF (76 aa)). Positions 35-47 (EAEDDSDDDEVED) are enriched in acidic residues. Histidine 184 serves as a coordination point for substrate. Residues aspartate 204, aspartate 215, and histidine 284 each contribute to the a divalent metal cation site. Histidine 292 is a substrate binding site. The a divalent metal cation site is built by glutamate 317 and glutamate 412.

This sequence belongs to the peptidase M24A family. Methionine aminopeptidase eukaryotic type 2 subfamily. Co(2+) is required as a cofactor. Zn(2+) serves as cofactor. It depends on Mn(2+) as a cofactor. The cofactor is Fe(2+).

The protein resides in the cytoplasm. The enzyme catalyses Release of N-terminal amino acids, preferentially methionine, from peptides and arylamides.. Functionally, cotranslationally removes the N-terminal methionine from nascent proteins. The N-terminal methionine is often cleaved when the second residue in the primary sequence is small and uncharged (Met-Ala-, Cys, Gly, Pro, Ser, Thr, or Val). The polypeptide is Methionine aminopeptidase 2-2 (Aspergillus niger (strain ATCC MYA-4892 / CBS 513.88 / FGSC A1513)).